Here is a 263-residue protein sequence, read N- to C-terminus: Indole-3-glycerol phosphate synthase (263 aa).

It belongs to the TrpC family.

It catalyses the reaction 1-(2-carboxyphenylamino)-1-deoxy-D-ribulose 5-phosphate + H(+) = (1S,2R)-1-C-(indol-3-yl)glycerol 3-phosphate + CO2 + H2O. Its pathway is amino-acid biosynthesis; L-tryptophan biosynthesis; L-tryptophan from chorismate: step 4/5. This is Indole-3-glycerol phosphate synthase from Sulfurimonas denitrificans (strain ATCC 33889 / DSM 1251) (Thiomicrospira denitrificans (strain ATCC 33889 / DSM 1251)).